The primary structure comprises 117 residues: Large ribosomal subunit protein eL34 (117 aa).

Residue Ser12 is modified to Phosphoserine. N6-acetyllysine occurs at positions 36 and 43. A Glycyl lysine isopeptide (Lys-Gly) (interchain with G-Cter in SUMO2) cross-link involves residue Lys108.

It belongs to the eukaryotic ribosomal protein eL34 family. Component of the large ribosomal subunit.

The protein localises to the cytoplasm. Its subcellular location is the cytosol. It is found in the endoplasmic reticulum. Its function is as follows. Component of the large ribosomal subunit. The ribosome is a large ribonucleoprotein complex responsible for the synthesis of proteins in the cell. In Mus musculus (Mouse), this protein is Large ribosomal subunit protein eL34 (Rpl34).